A 1006-amino-acid polypeptide reads, in one-letter code: MVYEAKIDPSLADLFRNSDKEPFPAMTHELPPEKSLKARLLEQEDERISNVLAHEKRFSTEPVVIDDVFMSRLCVDSQPGCSRIPDIDIANVFRDDLESCTLSSSEDEEEEEEPIGQISTFEMLHAPRKPIVWSEQELSDFDMKSRLLDMRMDHWDLARIANVPKRIAKGETVNLRMPRYSAEVVKQRIAKGVTDIFGHFSLVPHTLTKSHKPVAERKQILIERYHDLMNDFDYATRPGSVESKKYANLTKRLNLCNDFLSAPKLPHRLFPRLIIRSIRPPETPKEPVKRKMRESESDDSVIIIPRKIEKEKPRPTTENVVLKKVEMEKKRPRSPELVPKKIVMEKERPSSPDSEAEEREHNLRIEKERHQKELEFRREALRKREQEREEHKKRAQEELRRQMTAALEESTRRQAEMNRQIEDEARKRDELQRIAEEKKRKQLLEDQCRAKQEKEKRDAEELEQMRLNIARLAGTKDVENALKSPSLVEIVPPSDARAFEMIKWNAVKCKIPENWEKRKDKFYRVFEWPSDAAQRDIERDEVVSIPRSKPIVIPQEDTYITRNRIPLKLPPKVKQAVPALVVRNSNNATRTVVAATVNENGIQWPAETINIDEVVREIRGLMAPTRRNFAISLSPKTDEIDYQAINLNRLKSGIVYPFYFSDGLYWPLVFLKSSKNGKPEAQRHVEALTSCKSFSGKYASRYLLTTTKEEDSATKKFEDAYADSDGDWADYSTKPGRFSNRAGFKPHYDTSNDSFEVQKQRAVDSLNSQYEKERNELDAFGRYTDEYRKRKDRAQYQNHIKTHLRELVRDARLDAFSFKEEFKDFEGGFEDYPGTRVEPYENDWYSHGYTLYSHTRDAAYADYMHDVCKPYEDMLPPTEYHEIFNEWCFTPMLASLHYQLKKNAFDVLSPQDVKDMEARHRKYIGLVQKERKFSLEQALDVCKLTDYDKRQWTILHDQLVTHFKDFPSISGLVYDRNTNLLANVNRNLKHLFSTIYRDDSPPDDQF.

The disordered stretch occupies residues 326-371 (EMEKKRPRSPELVPKKIVMEKERPSSPDSEAEEREHNLRIEKERHQ). 2 stretches are compositionally biased toward basic and acidic residues: residues 338–350 (VPKK…ERPS) and 358–371 (EREH…ERHQ). 2 coiled-coil regions span residues 358–473 (EREH…ARLA) and 756–782 (EVQK…AFGR).

This is an uncharacterized protein from Caenorhabditis elegans.